Reading from the N-terminus, the 179-residue chain is ATP synthase subunit delta (179 aa).

This sequence belongs to the ATPase delta chain family. As to quaternary structure, F-type ATPases have 2 components, F(1) - the catalytic core - and F(0) - the membrane proton channel. F(1) has five subunits: alpha(3), beta(3), gamma(1), delta(1), epsilon(1). F(0) has three main subunits: a(1), b(2) and c(10-14). The alpha and beta chains form an alternating ring which encloses part of the gamma chain. F(1) is attached to F(0) by a central stalk formed by the gamma and epsilon chains, while a peripheral stalk is formed by the delta and b chains.

Its subcellular location is the cell membrane. F(1)F(0) ATP synthase produces ATP from ADP in the presence of a proton or sodium gradient. F-type ATPases consist of two structural domains, F(1) containing the extramembraneous catalytic core and F(0) containing the membrane proton channel, linked together by a central stalk and a peripheral stalk. During catalysis, ATP synthesis in the catalytic domain of F(1) is coupled via a rotary mechanism of the central stalk subunits to proton translocation. Its function is as follows. This protein is part of the stalk that links CF(0) to CF(1). It either transmits conformational changes from CF(0) to CF(1) or is implicated in proton conduction. This is ATP synthase subunit delta from Staphylococcus aureus (strain bovine RF122 / ET3-1).